We begin with the raw amino-acid sequence, 702 residues long: DnaJ homolog subfamily C member 14 (702 aa).

2 disordered regions span residues 1–148 (MAQK…GGNG) and 165–229 (DELE…KRSQ). A compositionally biased stretch (pro residues) spans 75 to 84 (HGPPGGPGPP). Residues 88–103 (EDPDQSETSSEEESGV) are compositionally biased toward acidic residues. A compositionally biased stretch (polar residues) spans 113-133 (TGNQKDGNSFLSIPSACNCQG). The span at 165-175 (DELEEEYDDEE) shows a compositional bias: acidic residues. Residues 192–201 (PPSRRQRHRF) are compositionally biased toward basic residues. The segment covering 202 to 217 (PTKEDTREGGRRDPRS) has biased composition (basic and acidic residues). Positions 218 to 227 (PGRHRLGRKR) are enriched in basic residues. A run of 3 helical transmembrane segments spans residues 250 to 270 (AGFWWLIELLVLVGEYVETCG), 300 to 320 (GWAQVMFQFLSQGFYCGVGLF), and 326 to 346 (LLGALLLLALALFLGFLQLGW). Positions 443–507 (NPFHVLGVEA…EKRKEYEMKR (65 aa)) constitute a J domain. The interval 658 to 702 (MPNGNFFAAPQPAPGAAAASKPNSTVPKGEAKPKRRKKVRRPFQR) is disordered. Positions 659 to 676 (PNGNFFAAPQPAPGAAAA) are enriched in low complexity. Over residues 690 to 702 (PKRRKKVRRPFQR) the composition is skewed to basic residues.

Interacts with the FxxxFxxxF motif of DRD1 via its C-terminal domain. As to expression, highly expressed in pancreas and selectively expressed in brain, lung, liver, skeletal muscle and kidney.

It localises to the endoplasmic reticulum membrane. In terms of biological role, regulates the export of target proteins, such as DRD1, from the endoplasmic reticulum to the cell surface. The chain is DnaJ homolog subfamily C member 14 (DNAJC14) from Homo sapiens (Human).